The chain runs to 586 residues: Laccase-9 (586 aa).

An N-terminal signal peptide occupies residues 1 to 25 (MPRVHHSLSNQAFLVLLLFSSIASA). Plastocyanin-like domains lie at 33 to 149 (HVKD…PRSG) and 159 to 307 (KEVP…YEGA). 3 N-linked (GlcNAc...) asparagine glycosylation sites follow: N52, N74, and N79. 2 residues coordinate Cu cation: H83 and H85. N-linked (GlcNAc...) asparagine glycosylation is present at N111. Residues H128 and H130 each contribute to the Cu cation site. N236, N333, N385, N403, and N451 each carry an N-linked (GlcNAc...) asparagine glycan. The Plastocyanin-like 3 domain occupies 411 to 552 (DFPDQPPLKF…MMAFIVQNGP (142 aa)). Residues H469, H472, H474, H531, C532, H533, and H537 each coordinate Cu cation.

Belongs to the multicopper oxidase family. Cu cation serves as cofactor. In terms of tissue distribution, predominantly expressed in roots.

It localises to the secreted. Its subcellular location is the extracellular space. The protein localises to the apoplast. The catalysed reaction is 4 hydroquinone + O2 = 4 benzosemiquinone + 2 H2O. Lignin degradation and detoxification of lignin-derived products. The protein is Laccase-9 (LAC9) of Arabidopsis thaliana (Mouse-ear cress).